The chain runs to 694 residues: Heat shock protein homolog SSE1 (694 aa).

The disordered stretch occupies residues 671–694 (AQRSADSEAKKDATPEGDAQMDLD). The segment covering 675 to 684 (ADSEAKKDAT) has biased composition (basic and acidic residues).

The protein belongs to the heat shock protein 70 family.

It localises to the cytoplasm. The polypeptide is Heat shock protein homolog SSE1 (SSE1) (Candida glabrata (strain ATCC 2001 / BCRC 20586 / JCM 3761 / NBRC 0622 / NRRL Y-65 / CBS 138) (Yeast)).